We begin with the raw amino-acid sequence, 255 residues long: Imidazole glycerol phosphate synthase subunit HisF (255 aa).

Catalysis depends on residues Asp-12 and Asp-131.

It belongs to the HisA/HisF family. As to quaternary structure, heterodimer of HisH and HisF.

The protein resides in the cytoplasm. The enzyme catalyses 5-[(5-phospho-1-deoxy-D-ribulos-1-ylimino)methylamino]-1-(5-phospho-beta-D-ribosyl)imidazole-4-carboxamide + L-glutamine = D-erythro-1-(imidazol-4-yl)glycerol 3-phosphate + 5-amino-1-(5-phospho-beta-D-ribosyl)imidazole-4-carboxamide + L-glutamate + H(+). The protein operates within amino-acid biosynthesis; L-histidine biosynthesis; L-histidine from 5-phospho-alpha-D-ribose 1-diphosphate: step 5/9. In terms of biological role, IGPS catalyzes the conversion of PRFAR and glutamine to IGP, AICAR and glutamate. The HisF subunit catalyzes the cyclization activity that produces IGP and AICAR from PRFAR using the ammonia provided by the HisH subunit. The polypeptide is Imidazole glycerol phosphate synthase subunit HisF (Vesicomyosocius okutanii subsp. Calyptogena okutanii (strain HA)).